The chain runs to 109 residues: MDIWRPEIKYLRYTNGFNVSELEDACFKFNYKFPKVGYCRVPSHAWCRNQGSFCATLTLYGKSKHYDKYFGVITGFTAFANTVEEAVNKLVFLAVDFITWRRQELNVYG.

Belongs to the coronaviruses ns12.7 protein family.

The protein is Non-structural protein of 12.7 kDa of Bos taurus (Bovine).